A 247-amino-acid chain; its full sequence is 2,3-bisphosphoglycerate-dependent phosphoglycerate mutase (247 aa).

Residues 8 to 15 (RHGESVWN), 21 to 22 (TG), Arg-60, 87 to 90 (ERHY), Lys-98, 114 to 115 (RR), and 183 to 184 (GN) each bind substrate. The active-site Tele-phosphohistidine intermediate is His-9. The Proton donor/acceptor role is filled by Glu-87.

This sequence belongs to the phosphoglycerate mutase family. BPG-dependent PGAM subfamily. As to quaternary structure, homodimer.

The enzyme catalyses (2R)-2-phosphoglycerate = (2R)-3-phosphoglycerate. It participates in carbohydrate degradation; glycolysis; pyruvate from D-glyceraldehyde 3-phosphate: step 3/5. In terms of biological role, catalyzes the interconversion of 2-phosphoglycerate and 3-phosphoglycerate. The chain is 2,3-bisphosphoglycerate-dependent phosphoglycerate mutase from Geobacter metallireducens (strain ATCC 53774 / DSM 7210 / GS-15).